Reading from the N-terminus, the 102-residue chain is Large ribosomal subunit protein bL21 (102 aa).

This sequence belongs to the bacterial ribosomal protein bL21 family. In terms of assembly, part of the 50S ribosomal subunit. Contacts protein L20.

Its function is as follows. This protein binds to 23S rRNA in the presence of protein L20. The polypeptide is Large ribosomal subunit protein bL21 (Pelobacter propionicus (strain DSM 2379 / NBRC 103807 / OttBd1)).